Here is a 550-residue protein sequence, read N- to C-terminus: Arginine--tRNA ligase (550 aa).

A 'HIGH' region motif is present at residues 130 to 140 (ANPTGPIHLGG).

This sequence belongs to the class-I aminoacyl-tRNA synthetase family. Monomer.

It is found in the cytoplasm. The enzyme catalyses tRNA(Arg) + L-arginine + ATP = L-arginyl-tRNA(Arg) + AMP + diphosphate. The polypeptide is Arginine--tRNA ligase (Corynebacterium efficiens (strain DSM 44549 / YS-314 / AJ 12310 / JCM 11189 / NBRC 100395)).